Consider the following 2210-residue polypeptide: Genome polyprotein (2210 aa).

Residues 1-24 (MAPVVSRDQCKPKTPKPHRPAPPH) are disordered. The span at 13 to 22 (KTPKPHRPAP) shows a compositional bias: basic residues. The region spanning 426–585 (SNKIVELSTM…ADFLRQHPGV (160 aa)) is the SF3 helicase domain. 456 to 463 (GPPGHGKS) contributes to the ATP binding site. At Tyr-940 the chain carries O-(5'-phospho-RNA)-tyrosine. A Peptidase C24 domain is found at 991 to 1136 (GNNCDDIPLH…KVITPITPEP (146 aa)). Active-site for 3CLpro activity residues include His-1025, Asp-1039, and Cys-1103. A RdRp catalytic domain is found at 1379 to 1501 (DHCLELDYSK…TIPSHLTKSI (123 aa)). The interval 1656-1685 (LIREGNMSDNKSIPEQQHESSRAMDAGATG) is disordered.

In terms of processing, specific enzymatic cleavages by its own cysteine protease yield mature proteins. The protease cleaves itself from the nascent polyprotein autocatalytically. Precursor p41 can be cleaved by viral 3CLpro into protein p19 and VPg, or cleaved by host protease into protein p23/2 and protein p18. VPg is uridylylated by the polymerase and is covalently attached to the 5'-end of the polyadenylated genomic and subgenomic RNAs. This uridylylated form acts as a nucleotide-peptide primer for the polymerase.

The protein localises to the virion. It is found in the host cytoplasm. It catalyses the reaction a ribonucleoside 5'-triphosphate + H2O = a ribonucleoside 5'-diphosphate + phosphate + H(+). The enzyme catalyses Endopeptidase with a preference for cleavage when the P1 position is occupied by Glu-|-Xaa and the P1' position is occupied by Gly-|-Yaa.. The catalysed reaction is RNA(n) + a ribonucleoside 5'-triphosphate = RNA(n+1) + diphosphate. Its function is as follows. Displays NTPase activity, but no helicase activity. Induces the formation of convoluted membranes derived from the host ER. These remodeled membranes probably form the viral factories that contain the replication complex. Together with NS2 and NS4, initiates the formation of the replication complex. Functionally, viral genome-linked protein is covalently linked to the 5'-end of the positive-strand, negative-strand genomic RNAs and subgenomic RNA. Acts as a genome-linked replication primer. May recruit ribosome to viral RNA thereby promoting viral proteins translation. Interacts with host translation initiation complex to allow the translation of viral proteins. Processes the polyprotein. 3CLpro-RdRp is first released by autocleavage, then all other proteins are cleaved. May cleave polyadenylate-binding protein thereby inhibiting cellular translation. In terms of biological role, replicates genomic and antigenomic RNA by recognizing replications specific signals. Also transcribes a subgenomic mRNA by initiating RNA synthesis internally on antigenomic RNA. This sgRNA codes for structural proteins. Catalyzes the covalent attachment VPg with viral RNAs. Its function is as follows. Capsid protein self assembles to form an icosahedral capsid with a T=3 symmetry, about 35 nm in diameter, and consisting of 180 capsid proteins. A smaller form of capsid with a diameter of 23 nm might be capsid proteins assembled as icosahedron with T=1 symmetry. The capsid encapsulate VP2 proteins and genomic or subgenomic RNA. Attaches virion to target cells by binding histo-blood group antigens, inducing endocytosis of the viral particle. Acidification of the endosome induces conformational change of capsid protein thereby injecting virus genomic RNA into host cytoplasm. The chain is Genome polyprotein from Bovine enteric calicivirus NB (isolate Bovine/United States/N ebraska/1980) (BEC-NB).